The following is a 348-amino-acid chain: Putative serine/threonine-protein phosphatase C26H8.05c (348 aa).

Residues aspartate 53, histidine 55, aspartate 81, and asparagine 113 each coordinate Mn(2+). Catalysis depends on histidine 114, which acts as the Proton donor. Mn(2+) contacts are provided by histidine 163 and histidine 237. The tract at residues 259–282 (TNEEDSELDSDSASPVDDSPAPGD) is disordered. Residues 269–280 (DSASPVDDSPAP) are compositionally biased toward low complexity. The residue at position 272 (serine 272) is a Phosphoserine. Residue leucine 348 is modified to Leucine methyl ester.

This sequence belongs to the PPP phosphatase family. PP-1 subfamily. Mn(2+) serves as cofactor.

Its subcellular location is the cytoplasm. It is found in the nucleus. The catalysed reaction is O-phospho-L-seryl-[protein] + H2O = L-seryl-[protein] + phosphate. It catalyses the reaction O-phospho-L-threonyl-[protein] + H2O = L-threonyl-[protein] + phosphate. In Schizosaccharomyces pombe (strain 972 / ATCC 24843) (Fission yeast), this protein is Putative serine/threonine-protein phosphatase C26H8.05c.